We begin with the raw amino-acid sequence, 279 residues long: Thymidylate synthase (279 aa).

A dUMP-binding site is contributed by 133–134 (RR). C154 acts as the Nucleophile in catalysis. DUMP contacts are provided by residues 178–181 (RSND), N189, and 219–221 (HIY). D181 is a binding site for (6R)-5,10-methylene-5,6,7,8-tetrahydrofolate. A278 contributes to the (6R)-5,10-methylene-5,6,7,8-tetrahydrofolate binding site.

This sequence belongs to the thymidylate synthase family. Bacterial-type ThyA subfamily. In terms of assembly, homodimer.

The protein localises to the cytoplasm. It carries out the reaction dUMP + (6R)-5,10-methylene-5,6,7,8-tetrahydrofolate = 7,8-dihydrofolate + dTMP. It functions in the pathway pyrimidine metabolism; dTTP biosynthesis. Its function is as follows. Catalyzes the reductive methylation of 2'-deoxyuridine-5'-monophosphate (dUMP) to 2'-deoxythymidine-5'-monophosphate (dTMP) while utilizing 5,10-methylenetetrahydrofolate (mTHF) as the methyl donor and reductant in the reaction, yielding dihydrofolate (DHF) as a by-product. This enzymatic reaction provides an intracellular de novo source of dTMP, an essential precursor for DNA biosynthesis. This chain is Thymidylate synthase, found in Streptococcus pneumoniae (strain ATCC 700669 / Spain 23F-1).